The sequence spans 663 residues: 4-hydroxy-3-methylbut-2-en-1-yl diphosphate synthase (flavodoxin) (663 aa).

Positions 568, 571, 602, and 609 each coordinate [4Fe-4S] cluster.

Belongs to the IspG family. The cofactor is [4Fe-4S] cluster.

The catalysed reaction is (2E)-4-hydroxy-3-methylbut-2-enyl diphosphate + oxidized [flavodoxin] + H2O + 2 H(+) = 2-C-methyl-D-erythritol 2,4-cyclic diphosphate + reduced [flavodoxin]. The protein operates within isoprenoid biosynthesis; isopentenyl diphosphate biosynthesis via DXP pathway; isopentenyl diphosphate from 1-deoxy-D-xylulose 5-phosphate: step 5/6. Its function is as follows. Converts 2C-methyl-D-erythritol 2,4-cyclodiphosphate (ME-2,4cPP) into 1-hydroxy-2-methyl-2-(E)-butenyl 4-diphosphate. This chain is 4-hydroxy-3-methylbut-2-en-1-yl diphosphate synthase (flavodoxin), found in Leptospira interrogans serogroup Icterohaemorrhagiae serovar copenhageni (strain Fiocruz L1-130).